Reading from the N-terminus, the 343-residue chain is Dihydroorotase (343 aa).

Zn(2+) is bound by residues H13 and H15. Substrate contacts are provided by residues 15–17 and N41; that span reads HLR. Residues K99, H136, and H174 each contribute to the Zn(2+) site. The residue at position 99 (K99) is an N6-carboxylysine. H136 provides a ligand contact to substrate. Substrate is bound at residue L219. Residue D247 coordinates Zn(2+). The active site involves D247. Positions 251 and 263 each coordinate substrate.

The protein belongs to the metallo-dependent hydrolases superfamily. DHOase family. Class II DHOase subfamily. As to quaternary structure, homodimer. The cofactor is Zn(2+).

The enzyme catalyses (S)-dihydroorotate + H2O = N-carbamoyl-L-aspartate + H(+). It participates in pyrimidine metabolism; UMP biosynthesis via de novo pathway; (S)-dihydroorotate from bicarbonate: step 3/3. Functionally, catalyzes the reversible cyclization of carbamoyl aspartate to dihydroorotate. This chain is Dihydroorotase, found in Shewanella baltica (strain OS223).